The sequence spans 117 residues: Large ribosomal subunit protein uL18 (117 aa).

This sequence belongs to the universal ribosomal protein uL18 family. In terms of assembly, part of the 50S ribosomal subunit; part of the 5S rRNA/L5/L18/L25 subcomplex. Contacts the 5S and 23S rRNAs.

Functionally, this is one of the proteins that bind and probably mediate the attachment of the 5S RNA into the large ribosomal subunit, where it forms part of the central protuberance. The protein is Large ribosomal subunit protein uL18 of Acidithiobacillus ferrooxidans (strain ATCC 23270 / DSM 14882 / CIP 104768 / NCIMB 8455) (Ferrobacillus ferrooxidans (strain ATCC 23270)).